A 246-amino-acid polypeptide reads, in one-letter code: Major prion protein (246 aa).

The signal sequence occupies residues Met-1–Cys-15. Positions Lys-16–Ser-223 are interaction with GRB2, ERI3 and SYN1. Residues Arg-18 to Met-102 are disordered. 5 repeat units span residues Pro-44 to Gln-52, Pro-53 to Gln-60, Pro-61 to Gln-68, Pro-69 to Gln-76, and Pro-77 to Gln-84. The tract at residues Pro-44–Gln-84 is 5 X 8 AA tandem repeats of P-H-G-G-G-W-G-Q. Residues Gln-45–Thr-88 are compositionally biased toward gly residues. The Cu(2+) site is built by His-54, Gly-55, Gly-56, His-62, Gly-63, Gly-64, His-70, Gly-71, Gly-72, His-78, Gly-79, and Gly-80. A compositionally biased stretch (basic residues) spans Gln-91–Met-102. A disulfide bond links Cys-172 and Cys-207. Asn-174 and Asn-190 each carry an N-linked (GlcNAc...) asparagine glycan. Ser-223 carries GPI-anchor amidated serine lipidation. Residues Ser-224 to Gly-246 constitute a propeptide, removed in mature form.

It belongs to the prion family. As to quaternary structure, monomer and homodimer. Has a tendency to aggregate into amyloid fibrils containing a cross-beta spine, formed by a steric zipper of superposed beta-strands. Soluble oligomers may represent an intermediate stage on the path to fibril formation. Copper binding may promote oligomerization. Interacts with GRB2, APP, ERI3/PRNPIP and SYN1. Mislocalized cytosolically exposed PrP interacts with MGRN1; this interaction alters MGRN1 subcellular location and causes lysosomal enlargement. Interacts with KIAA1191.

The protein resides in the cell membrane. Its subcellular location is the golgi apparatus. Its primary physiological function is unclear. Has cytoprotective activity against internal or environmental stresses. May play a role in neuronal development and synaptic plasticity. May be required for neuronal myelin sheath maintenance. May play a role in iron uptake and iron homeostasis. Soluble oligomers are toxic to cultured neuroblastoma cells and induce apoptosis (in vitro). Association with GPC1 (via its heparan sulfate chains) targets PRNP to lipid rafts. Also provides Cu(2+) or Zn(2+) for the ascorbate-mediated GPC1 deaminase degradation of its heparan sulfate side chains. The sequence is that of Major prion protein (PRNP) from Cercopithecus mona (Mona monkey).